A 1223-amino-acid chain; its full sequence is Rho family-interacting cell polarization regulator 1 (1223 aa).

Position 22 is a phosphoserine (Ser22). Residues 83–112 adopt a coiled-coil conformation; it reads RGLTAYLEVHQQEQEKLQRQIKESKRNSRL. 2 positions are modified to phosphoserine: Ser345 and Ser347. The residue at position 351 (Thr351) is a Phosphothreonine. The disordered stretch occupies residues 371–411; it reads NGTAWSLSSESSDDSSSPQLSGTARHSTPKPLVQQPEPLPV. Composition is skewed to low complexity over residues 376-391 and 399-411; these read SLSSESSDDSSSPQLS and PKPLVQQPEPLPV. Ser451, Ser454, and Ser468 each carry phosphoserine. Low complexity-rich tracts occupy residues 566 to 586 and 595 to 655; these read TTIGSAHTTTPSPLTSTGSVP and TPSP…TSPT. Disordered stretches follow at residues 566–771 and 856–887; these read TTIG…QHSE and FLNDDEDEDNDGPGDRHTSSPEVVAEDRLDSS. The span at 656-665 shows a compositional bias: polar residues; the sequence is QEAKMSTHTT. The span at 673 to 688 shows a compositional bias: low complexity; the sequence is TTTSPISTTESPSPST. Composition is skewed to polar residues over residues 693–703 and 725–741; these read ISSSSAESTGP and ASCTSYQSLASSGSKPL. Ser748 is modified (phosphoserine). Low complexity predominate over residues 748-767; it reads SPEQIPKSPSSSPSSSAPEP. Residues 858 to 867 are compositionally biased toward acidic residues; the sequence is NDDEDEDNDG. Basic and acidic residues predominate over residues 868-885; it reads PGDRHTSSPEVVAEDRLD. Phosphoserine occurs at positions 874 and 875.

Belongs to the RIPOR family. Interacts (via N-terminus) with RHOA (GTP-bound form); this interaction links active RHOA to STK24 and STK26 kinases. Interacts with RHOB. Interacts with RHOC. Interacts (via C-terminus) with PDCD10; this interaction occurs in a Rho-independent manner. Interacts (via C-terminus) with STK24; this interaction occurs in a PDCD10-dependent and Rho-independent manner. Interacts (via C-terminus) with STK26; this interaction occurs in a PDCD10-dependent and Rho-independent manner. Interacts (via N-terminus) with 14-3-3 proteins; these interactions occur in a Rho-dependent manner. As to expression, expressed in the kidney exclusively by glomerular podocytes.

It localises to the cytoplasm. Its subcellular location is the golgi apparatus. Functionally, downstream effector protein for Rho-type small GTPases that plays a role in cell polarity and directional migration. Acts as an adapter protein, linking active Rho proteins to STK24 and STK26 kinases, and hence positively regulates Golgi reorientation in polarized cell migration upon Rho activation. Involved in the subcellular relocation of STK26 from the Golgi to cytoplasm punctae in a Rho- and PDCD10-dependent manner upon serum stimulation. This chain is Rho family-interacting cell polarization regulator 1, found in Mus musculus (Mouse).